A 246-amino-acid polypeptide reads, in one-letter code: Probable transcriptional regulatory protein CTC_02215 (246 aa).

This sequence belongs to the TACO1 family.

It is found in the cytoplasm. In Clostridium tetani (strain Massachusetts / E88), this protein is Probable transcriptional regulatory protein CTC_02215.